The sequence spans 962 residues: Glycine dehydrogenase (decarboxylating) (962 aa).

An N6-(pyridoxal phosphate)lysine modification is found at Lys-709.

This sequence belongs to the GcvP family. As to quaternary structure, the glycine cleavage system is composed of four proteins: P, T, L and H. Pyridoxal 5'-phosphate serves as cofactor.

The enzyme catalyses N(6)-[(R)-lipoyl]-L-lysyl-[glycine-cleavage complex H protein] + glycine + H(+) = N(6)-[(R)-S(8)-aminomethyldihydrolipoyl]-L-lysyl-[glycine-cleavage complex H protein] + CO2. Functionally, the glycine cleavage system catalyzes the degradation of glycine. The P protein binds the alpha-amino group of glycine through its pyridoxal phosphate cofactor; CO(2) is released and the remaining methylamine moiety is then transferred to the lipoamide cofactor of the H protein. This is Glycine dehydrogenase (decarboxylating) from Shewanella sediminis (strain HAW-EB3).